The primary structure comprises 200 residues: Probable GTP-binding protein EngB (200 aa).

Positions 22-199 constitute an EngB-type G domain; the sequence is NVAEVAFLGR…QDKITGYLFG (178 aa). Residues 30–37, 57–61, 85–88, 155–158, and 177–180 contribute to the GTP site; these read GRSNVGKS, GKTQL, DLPG, TKID, and FLSN. Mg(2+)-binding residues include Ser-37 and Thr-59.

Belongs to the TRAFAC class TrmE-Era-EngA-EngB-Septin-like GTPase superfamily. EngB GTPase family. It depends on Mg(2+) as a cofactor.

In terms of biological role, necessary for normal cell division and for the maintenance of normal septation. This Aliarcobacter butzleri (strain RM4018) (Arcobacter butzleri) protein is Probable GTP-binding protein EngB.